Here is a 274-residue protein sequence, read N- to C-terminus: Protein CURLY FLAG LEAF 1 (274 aa).

The tract at residues 17-44 (SLNGGGGGGGGRRRGRRAAAAEGSDDSE) is disordered. An EAR motif is present at residues 47-52 (TVELNS). The WW domain maps to 54-88 (VALPYHWEQCLDIRTGQVYYINWEDGTRTTIDPRS). Disordered stretches follow at residues 83–133 (TIDP…SGYT) and 175–216 (GRDG…SPTD). 3 stretches are compositionally biased toward low complexity: residues 87-106 (RSSS…SSSR), 121-133 (AAAA…SGYT), and 184-207 (SSSS…AVSS).

As to quaternary structure, binds to HDG1.

Negatively regulates the cuticle development probably by interacting with the HD-ZIP IV transcription factor HDG1. This Oryza sativa subsp. japonica (Rice) protein is Protein CURLY FLAG LEAF 1.